A 233-amino-acid chain; its full sequence is Protein lin-7 homolog A (233 aa).

In terms of domain architecture, L27 spans 25 to 80 (LDRDVARAIELLEKLQESGEVPVHKLQSLKKVLQSEFCTAIREVYQYMHETITVNG). In terms of domain architecture, PDZ spans 108–190 (VVELPKTDEG…SVKLVVRYTP (83 aa)).

This sequence belongs to the lin-7 family. Forms a complex with CASK and CASKIN1. Component of the brain-specific heterotrimeric complex (LIN-10-LIN-2-LIN-7 complex) composed of at least APBA1, CASK, and LIN7, which associates with the motor protein KIF17 to transport vesicles along microtubules. Can also interact with other modular proteins containing protein-protein interaction domains like PALS1, PALS2, MPP7, DLG1, DLG2 and DLG3 through its L27 domain. Interacts with DLG4, GRIN2B and MARCHF11 as well as CDH1 and CTNNB1, the channels KCNJ12/Kir2.2, KCNJ4/Kir2.3 and probably KCNJ2/Kir2.1 and SLC6A12/BGT-1 via its PDZ domain. The association of LIN7A with cadherin and beta-catenin is calcium-dependent, occurs at synaptic junctions and requires the actin cytoskeleton. Interacts with EGFR, ERBB2, ERBB3 and ERBB4 with both PDZ and KID domains. Associates with KIF17 via APBA1. Interacts with HTR4. Forms a tripartite complex composed of DLG1, MPP7 and LIN7 (LIN7A or LIN7C).

The protein resides in the cell membrane. It is found in the basolateral cell membrane. It localises to the cell junction. The protein localises to the postsynaptic density membrane. Its subcellular location is the tight junction. In terms of biological role, plays a role in establishing and maintaining the asymmetric distribution of channels and receptors at the plasma membrane of polarized cells. Forms membrane-associated multiprotein complexes that may regulate delivery and recycling of proteins to the correct membrane domains. The tripartite complex composed of LIN7 (LIN7A, LIN7B or LIN7C), CASK and APBA1 associates with the motor protein KIF17 to transport vesicles containing N-methyl-D-aspartate (NMDA) receptor subunit NR2B along microtubules. This complex may have the potential to couple synaptic vesicle exocytosis to cell adhesion in brain. Ensures the proper localization of GRIN2B (subunit 2B of the NMDA receptor) to neuronal postsynaptic density and may function in localizing synaptic vesicles at synapses where it is recruited by beta-catenin and cadherin. Required to localize Kir2 channels, GABA transporter (SLC6A12) and EGFR/ERBB1, ERBB2, ERBB3 and ERBB4 to the basolateral membrane of epithelial cells. In Bos taurus (Bovine), this protein is Protein lin-7 homolog A (LIN7A).